The primary structure comprises 557 residues: Urocanate hydratase (557 aa).

Residues 52–53 (GG), Gln130, 176–178 (GMG), Glu196, Arg201, 242–243 (NA), 263–267 (QTSAH), 273–274 (YL), and Tyr322 each bind NAD(+). The active site involves Cys410. NAD(+) is bound at residue Gly492.

The protein belongs to the urocanase family. NAD(+) serves as cofactor.

It localises to the cytoplasm. The catalysed reaction is 4-imidazolone-5-propanoate = trans-urocanate + H2O. It participates in amino-acid degradation; L-histidine degradation into L-glutamate; N-formimidoyl-L-glutamate from L-histidine: step 2/3. Functionally, catalyzes the conversion of urocanate to 4-imidazolone-5-propionate. The sequence is that of Urocanate hydratase from Pseudoalteromonas translucida (strain TAC 125).